Here is a 439-residue protein sequence, read N- to C-terminus: Trigger factor (439 aa).

Residues 163–248 (GDRVTIDYRG…LNKLEAPKLP (86 aa)) enclose the PPIase FKBP-type domain.

It belongs to the FKBP-type PPIase family. Tig subfamily.

The protein localises to the cytoplasm. The catalysed reaction is [protein]-peptidylproline (omega=180) = [protein]-peptidylproline (omega=0). Involved in protein export. Acts as a chaperone by maintaining the newly synthesized protein in an open conformation. Functions as a peptidyl-prolyl cis-trans isomerase. The polypeptide is Trigger factor (Nitrosomonas europaea (strain ATCC 19718 / CIP 103999 / KCTC 2705 / NBRC 14298)).